We begin with the raw amino-acid sequence, 96 residues long: Aspartyl/glutamyl-tRNA(Asn/Gln) amidotransferase subunit C (96 aa).

It belongs to the GatC family. In terms of assembly, heterotrimer of A, B and C subunits.

The enzyme catalyses L-glutamyl-tRNA(Gln) + L-glutamine + ATP + H2O = L-glutaminyl-tRNA(Gln) + L-glutamate + ADP + phosphate + H(+). The catalysed reaction is L-aspartyl-tRNA(Asn) + L-glutamine + ATP + H2O = L-asparaginyl-tRNA(Asn) + L-glutamate + ADP + phosphate + 2 H(+). Allows the formation of correctly charged Asn-tRNA(Asn) or Gln-tRNA(Gln) through the transamidation of misacylated Asp-tRNA(Asn) or Glu-tRNA(Gln) in organisms which lack either or both of asparaginyl-tRNA or glutaminyl-tRNA synthetases. The reaction takes place in the presence of glutamine and ATP through an activated phospho-Asp-tRNA(Asn) or phospho-Glu-tRNA(Gln). The sequence is that of Aspartyl/glutamyl-tRNA(Asn/Gln) amidotransferase subunit C from Symbiobacterium thermophilum (strain DSM 24528 / JCM 14929 / IAM 14863 / T).